Here is a 355-residue protein sequence, read N- to C-terminus: Alanine racemase (355 aa).

K34 functions as the Proton acceptor; specific for D-alanine in the catalytic mechanism. K34 carries the post-translational modification N6-(pyridoxal phosphate)lysine. R133 contacts substrate. The active-site Proton acceptor; specific for L-alanine is Y249. M297 provides a ligand contact to substrate.

The protein belongs to the alanine racemase family. Requires pyridoxal 5'-phosphate as cofactor.

The enzyme catalyses L-alanine = D-alanine. The protein operates within amino-acid biosynthesis; D-alanine biosynthesis; D-alanine from L-alanine: step 1/1. Catalyzes the interconversion of L-alanine and D-alanine. May also act on other amino acids. This chain is Alanine racemase (alr), found in Rickettsia rickettsii (strain Sheila Smith).